The chain runs to 195 residues: Imidazoleglycerol-phosphate dehydratase (195 aa).

This sequence belongs to the imidazoleglycerol-phosphate dehydratase family.

It localises to the cytoplasm. It catalyses the reaction D-erythro-1-(imidazol-4-yl)glycerol 3-phosphate = 3-(imidazol-4-yl)-2-oxopropyl phosphate + H2O. Its pathway is amino-acid biosynthesis; L-histidine biosynthesis; L-histidine from 5-phospho-alpha-D-ribose 1-diphosphate: step 6/9. The sequence is that of Imidazoleglycerol-phosphate dehydratase from Clostridium botulinum (strain Alaska E43 / Type E3).